Reading from the N-terminus, the 303-residue chain is 34 kDa antigenic protein homolog (303 aa).

Transmembrane regions (helical) follow at residues 42–62 (IAVA…MFTL), 77–97 (TGLP…ALVP), 102–122 (HVTV…SATF), and 134–154 (LWVV…ALLV). Low complexity-rich tracts occupy residues 194–207 (QGAQ…SPGP) and 215–255 (GYGS…HQGP). The tract at residues 194-303 (QGAQQAAGLQ…QSSSPGGAPV (110 aa)) is disordered. Over residues 256–271 (STPPTGFPSFSPPPPV) the composition is skewed to pro residues. Residues 274–286 (GTGSQAGSAPVNY) are compositionally biased toward polar residues. A compositionally biased stretch (low complexity) spans 287–303 (SNPSGGEQSSSPGGAPV).

This sequence to M.paratuberculosis 34 kDa antigenic protein.

It localises to the cell membrane. In Mycobacterium bovis (strain ATCC BAA-935 / AF2122/97), this protein is 34 kDa antigenic protein homolog.